The following is a 222-amino-acid chain: Putative hemin import ATP-binding protein HrtA (222 aa).

Positions 3–222 (LVVKDISKTF…QLYDGKIKNS (220 aa)) constitute an ABC transporter domain. 39–46 (GASGSGKT) lines the ATP pocket.

Belongs to the ABC transporter superfamily. HrtA family. As to quaternary structure, the complex is composed of two ATP-binding proteins (HrtA), two transmembrane proteins (HrtB) and a solute-binding protein.

It localises to the cell membrane. In terms of biological role, part of the ABC transporter complex hrt involved in hemin import. Responsible for energy coupling to the transport system. This Staphylococcus epidermidis (strain ATCC 12228 / FDA PCI 1200) protein is Putative hemin import ATP-binding protein HrtA (hrtA).